Reading from the N-terminus, the 596-residue chain is uncharacterized protein (596 aa).

2 stretches are compositionally biased toward basic residues: residues methionine 1–asparagine 10 and lysine 18–proline 29. Residues methionine 1 to lysine 30 form a disordered region.

This is an uncharacterized protein from Magallana gigas (Pacific oyster).